A 124-amino-acid polypeptide reads, in one-letter code: MAPAELALTLAAAGAGSVLRYLLGGWVAHRMGPEFPWGTLAVNALGCLGLGLLQGAAPHDRALLLVLGSGLLAGFTTFSTLMLETANLATAGERDRAFSNIVGTLALGLFALSAGARAGAWAAG.

A run of 4 helical transmembrane segments spans residues 7–27 (ALTL…GGWV), 35–55 (FPWG…LLQG), 63–83 (LLLV…TLML), and 101–121 (IVGT…AGAW).

The protein belongs to the fluoride channel Fluc/FEX (TC 1.A.43) family.

It localises to the cell membrane. It catalyses the reaction fluoride(in) = fluoride(out). Functionally, fluoride-specific ion channel. Important for reducing fluoride concentration in the cell, thus reducing its toxicity. In Rubrobacter xylanophilus (strain DSM 9941 / JCM 11954 / NBRC 16129 / PRD-1), this protein is Fluoride-specific ion channel FluC 1.